We begin with the raw amino-acid sequence, 398 residues long: Enolase (398 aa).

Residue Gln154 participates in (2R)-2-phosphoglycerate binding. The Proton donor role is filled by Glu196. Mg(2+) is bound by residues Asp232, Glu273, and Asp300. (2R)-2-phosphoglycerate is bound by residues Lys325, Arg354, Ser355, and Lys376. The active-site Proton acceptor is Lys325.

It belongs to the enolase family. Requires Mg(2+) as cofactor.

Its subcellular location is the cytoplasm. The protein resides in the secreted. The protein localises to the cell surface. It carries out the reaction (2R)-2-phosphoglycerate = phosphoenolpyruvate + H2O. It functions in the pathway carbohydrate degradation; glycolysis; pyruvate from D-glyceraldehyde 3-phosphate: step 4/5. Its function is as follows. Catalyzes the reversible conversion of 2-phosphoglycerate (2-PG) into phosphoenolpyruvate (PEP). It is essential for the degradation of carbohydrates via glycolysis. The protein is Enolase of Halobacterium salinarum (strain ATCC 700922 / JCM 11081 / NRC-1) (Halobacterium halobium).